The following is a 369-amino-acid chain: NAD(P)H-quinone oxidoreductase subunit 1, chloroplastic (369 aa).

5 helical membrane-spanning segments follow: residues 25–45 (FGFIWIITPILTYTLGVTIGI), 104–124 (VMVVVPVFLSYLVIPLGHGII), 130–150 (IGVFFWIAVSSVAPLGLLTAG), 270–290 (LSATILYLGGWNSPIPFLFLP), and 306–326 (VISITIAIIITLAKAYSFLFI).

It belongs to the complex I subunit 1 family. As to quaternary structure, NDH is composed of at least 16 different subunits, 5 of which are encoded in the nucleus.

The protein resides in the plastid. Its subcellular location is the chloroplast thylakoid membrane. It carries out the reaction a plastoquinone + NADH + (n+1) H(+)(in) = a plastoquinol + NAD(+) + n H(+)(out). The catalysed reaction is a plastoquinone + NADPH + (n+1) H(+)(in) = a plastoquinol + NADP(+) + n H(+)(out). Functionally, NDH shuttles electrons from NAD(P)H:plastoquinone, via FMN and iron-sulfur (Fe-S) centers, to quinones in the photosynthetic chain and possibly in a chloroplast respiratory chain. The immediate electron acceptor for the enzyme in this species is believed to be plastoquinone. Couples the redox reaction to proton translocation, and thus conserves the redox energy in a proton gradient. The sequence is that of NAD(P)H-quinone oxidoreductase subunit 1, chloroplastic from Huperzia lucidula (Shining clubmoss).